A 460-amino-acid chain; its full sequence is tRNA modification GTPase MnmE (460 aa).

R22, E87, and R126 together coordinate (6S)-5-formyl-5,6,7,8-tetrahydrofolate. One can recognise a TrmE-type G domain in the interval 222–381 (GLKTAIIGKP…LENTIYNLVF (160 aa)). Residue N232 participates in K(+) binding. Residues 232-237 (NVGKSS), 251-257 (TDIPGTT), and 276-279 (DTAG) each bind GTP. Position 236 (S236) interacts with Mg(2+). Residues T251, I253, and T256 each contribute to the K(+) site. A Mg(2+)-binding site is contributed by T257. A (6S)-5-formyl-5,6,7,8-tetrahydrofolate-binding site is contributed by K460.

The protein belongs to the TRAFAC class TrmE-Era-EngA-EngB-Septin-like GTPase superfamily. TrmE GTPase family. As to quaternary structure, homodimer. Heterotetramer of two MnmE and two MnmG subunits. K(+) is required as a cofactor.

Its subcellular location is the cytoplasm. Functionally, exhibits a very high intrinsic GTPase hydrolysis rate. Involved in the addition of a carboxymethylaminomethyl (cmnm) group at the wobble position (U34) of certain tRNAs, forming tRNA-cmnm(5)s(2)U34. This Thermoanaerobacter sp. (strain X514) protein is tRNA modification GTPase MnmE.